Consider the following 230-residue polypeptide: Endonuclease NucS (230 aa).

This sequence belongs to the NucS endonuclease family.

It is found in the cytoplasm. Cleaves both 3' and 5' ssDNA extremities of branched DNA structures. This is Endonuclease NucS from Corynebacterium efficiens (strain DSM 44549 / YS-314 / AJ 12310 / JCM 11189 / NBRC 100395).